A 515-amino-acid chain; its full sequence is MAYVLTETAAGYALLKASDKKIHKSSSLIEDLNTADKVAEQFKIHRFEKFQSAANALEEANAVIEGRVSDSLKKMLEDAKSDKKATLIVSEAKLGNAINKLGLNFSVVSDAASLDLHRAIREFLPELLPGLDDSMLKQMSLGLAHSIGRHKLKFSADKVDTMIVQAIALLDDLDKELNTYAMRCKEWYGWHFPELAKMIVDSVAYARIILTMGVRSNASETDLSEILPEELEEQVKSAAEVSMGTEITAIDLENIRALAEQIVDFAAYREQLSNYLSSRMKAIAPNLTALVGELVGARLIAHAGSLTSLAKAPASTIQILGAEKALFRALKTKHDTPKYGLLYHASLVGQASGKNKGKIARVLAAKAAVALRYDSLAEERDDSGDFGLEVRAKVESRLSALEGRDLRTTSKVVREQPKVDITEARAYNADADAPTAEVDSDDESDTEEIDTKKEKKEKKEKKEKKDKKRKREDDDEEEEDKKSKKEKKEKKEKKEKKEKKEKKDKKDKKSKKEKK.

In terms of domain architecture, Nop spans 283–403 (IAPNLTALVG…VESRLSALEG (121 aa)). A disordered region spans residues 423–515 (EARAYNADAD…KDKKSKKEKK (93 aa)). Acidic residues predominate over residues 438-448 (VDSDDESDTEE). 2 stretches are compositionally biased toward basic residues: residues 455-470 (KKEK…KKRK) and 484-515 (KKEK…KEKK).

It belongs to the NOP5/NOP56 family.

The protein resides in the nucleus. It localises to the nucleolus. Its function is as follows. Required for pre-18S rRNA processing. May bind microtubules. The sequence is that of Nucleolar protein 58 (NOP58) from Scheffersomyces stipitis (strain ATCC 58785 / CBS 6054 / NBRC 10063 / NRRL Y-11545) (Yeast).